Here is a 375-residue protein sequence, read N- to C-terminus: MFISEIQLKNYRNYEKLELSFEDKVNVIIGENAQGKTNLMEAIYVLAMAKSHRTSNDRELIRWDEDFGQIKGKLQKRNSSLSLELNISKKGKKAKLNQLEQQKLSQYIGVMNVVMFAPEDLNLVKGSPQVRRRFLDMELGQIAPVYLYELSQYQKVLTQRNHLLKKMQGNSKNEETMLDVFTLQLIEHGTKILQKRFEFLHLLQEWAAPIHRGISRGLEELEIVYKPSVDVSESMDLSKIKEVYYESFQSVKQREIFRGTTLIGPHRDDLQFFVNSKNVQVFGSQGQQRTTALSLKLAEIELIYSEVKEYPILLLDDVLSELDDYRQSHLLNTIQGKVQTFVTTTSVDGIEHETLKEAKTIHVTNGTVDCEIDRA.

An ATP-binding site is contributed by 30–37 (GENAQGKT).

This sequence belongs to the RecF family.

The protein resides in the cytoplasm. The RecF protein is involved in DNA metabolism; it is required for DNA replication and normal SOS inducibility. RecF binds preferentially to single-stranded, linear DNA. It also seems to bind ATP. The sequence is that of DNA replication and repair protein RecF from Bacillus thuringiensis (strain Al Hakam).